A 1770-amino-acid chain; its full sequence is Transposon Ty2-GR1 Gag-Pol polyprotein (1770 aa).

Composition is skewed to polar residues over residues 1–11 (MESQQLHQNPH), 19–39 (ASVT…SASN), and 49–60 (KVNSQQETTPGT). 2 disordered regions span residues 1–86 (MESQ…GQYQ) and 360–453 (HSEY…LPDH). Positions 295–397 (ENNINVSDRL…SSKPRAAKAH (103 aa)) are RNA-binding. Low complexity predominate over residues 369–381 (TSPNTTNTKVTTR). Polar residues predominate over residues 399–408 (IATSSKFSRV). Aspartate 457 functions as the For protease activity; shared with dimeric partner in the catalytic mechanism. Residues 579-636 (NVNKSKSVNKYPYPLIHRMLGHANFRSIQKSLKKNAVTYLKESDIEWSNASTYQCPDC) form an integrase-type zinc finger-like region. Residues 656-831 (ESYEPFQYLH…AGLDITTILP (176 aa)) enclose the Integrase catalytic domain. Mg(2+)-binding residues include aspartate 667 and aspartate 732. Disordered regions lie at residues 1004 to 1034 (MGGT…STNE), 1059 to 1135 (TEEP…KSSK), 1146 to 1165 (LPLP…VSKD), and 1170 to 1205 (HSRQ…TEIE). Polar residues-rich tracts occupy residues 1009–1034 (ESDT…STNE) and 1065–1082 (QRNS…STPS). Residues 1151–1165 (LTHKSPTDTSDVSKD) are compositionally biased toward basic and acidic residues. Residues 1193-1227 (KKRSLEDNETEIEVSRDTWNNKNMRSLEPPRSKKR) carry the Bipartite nuclear localization signal motif. Residues 1353–1491 (NDYYITQLDI…DILGLEIKYQ (139 aa)) enclose the Reverse transcriptase Ty1/copia-type domain. The Mg(2+) site is built by aspartate 1361, aspartate 1442, aspartate 1443, aspartate 1625, glutamate 1667, and aspartate 1700. An RNase H Ty1/copia-type domain is found at 1625–1767 (DASYGNQPYY…IKTFKLLTNK (143 aa)).

The capsid protein forms a homotrimer, from which the VLPs are assembled. The protease is a homodimer, whose active site consists of two apposed aspartic acid residues. Post-translationally, initially, virus-like particles (VLPs) are composed of the structural unprocessed proteins Gag and Gag-Pol, and also contain the host initiator methionine tRNA (tRNA(i)-Met) which serves as a primer for minus-strand DNA synthesis, and a dimer of genomic Ty RNA. Processing of the polyproteins occurs within the particle and proceeds by an ordered pathway, called maturation. First, the protease (PR) is released by autocatalytic cleavage of the Gag-Pol polyprotein, and this cleavage is a prerequisite for subsequent processing at the remaining sites to release the mature structural and catalytic proteins. Maturation takes place prior to the RT reaction and is required to produce transposition-competent VLPs.

It localises to the cytoplasm. The protein resides in the nucleus. The enzyme catalyses DNA(n) + a 2'-deoxyribonucleoside 5'-triphosphate = DNA(n+1) + diphosphate. It carries out the reaction Endonucleolytic cleavage to 5'-phosphomonoester.. In terms of biological role, capsid protein (CA) is the structural component of the virus-like particle (VLP), forming the shell that encapsulates the retrotransposons dimeric RNA genome. The particles are assembled from trimer-clustered units and there are holes in the capsid shells that allow for the diffusion of macromolecules. CA also has nucleocapsid-like chaperone activity, promoting primer tRNA(i)-Met annealing to the multipartite primer-binding site (PBS), dimerization of Ty2 RNA and initiation of reverse transcription. Its function is as follows. The aspartyl protease (PR) mediates the proteolytic cleavages of the Gag and Gag-Pol polyproteins after assembly of the VLP. Functionally, reverse transcriptase/ribonuclease H (RT) is a multifunctional enzyme that catalyzes the conversion of the retro-elements RNA genome into dsDNA within the VLP. The enzyme displays a DNA polymerase activity that can copy either DNA or RNA templates, and a ribonuclease H (RNase H) activity that cleaves the RNA strand of RNA-DNA heteroduplexes during plus-strand synthesis and hydrolyzes RNA primers. The conversion leads to a linear dsDNA copy of the retrotransposon that includes long terminal repeats (LTRs) at both ends. Integrase (IN) targets the VLP to the nucleus, where a subparticle preintegration complex (PIC) containing at least integrase and the newly synthesized dsDNA copy of the retrotransposon must transit the nuclear membrane. Once in the nucleus, integrase performs the integration of the dsDNA into the host genome. This chain is Transposon Ty2-GR1 Gag-Pol polyprotein (TY2B-GR1), found in Saccharomyces cerevisiae (strain ATCC 204508 / S288c) (Baker's yeast).